We begin with the raw amino-acid sequence, 254 residues long: Geranylgeranylglyceryl phosphate synthase (254 aa).

The Mg(2+) site is built by Asp28 and Ser57. Sn-glycerol 1-phosphate is bound by residues 176-182 (YLEAGSG), 207-208 (GG), and 229-230 (GT).

It belongs to the GGGP/HepGP synthase family. Group II subfamily. It depends on Mg(2+) as a cofactor.

Its subcellular location is the cytoplasm. It carries out the reaction sn-glycerol 1-phosphate + (2E,6E,10E)-geranylgeranyl diphosphate = sn-3-O-(geranylgeranyl)glycerol 1-phosphate + diphosphate. The protein operates within membrane lipid metabolism; glycerophospholipid metabolism. In terms of biological role, prenyltransferase that catalyzes the transfer of the geranylgeranyl moiety of geranylgeranyl diphosphate (GGPP) to the C3 hydroxyl of sn-glycerol-1-phosphate (G1P). This reaction is the first ether-bond-formation step in the biosynthesis of archaeal membrane lipids. The protein is Geranylgeranylglyceryl phosphate synthase of Pyrococcus horikoshii (strain ATCC 700860 / DSM 12428 / JCM 9974 / NBRC 100139 / OT-3).